The chain runs to 719 residues: NF-kappa-B inhibitor zeta (719 aa).

The span at 46–81 (GACDGGCSASGPSAPGSPGSDSSDFSSASSVSSCGA) shows a compositional bias: low complexity. The disordered stretch occupies residues 46-97 (GACDGGCSASGPSAPGSPGSDSSDFSSASSVSSCGAVESRPRGGARAERLQV). Residues 84-97 (SRPRGGARAERLQV) are compositionally biased toward basic and acidic residues. Residues 108 to 130 (RGPFQGVRVKNSVKELLLHIRSH) enclose the OCA domain. The Nuclear localization signal motif lies at 164–179 (KRKGSDSLSDGPACKR). Disordered stretches follow at residues 188–210 (LTPPQTPTPAESMEDVHHNESKQ) and 289–343 (YSPQ…FAPL). Residues 201-210 (EDVHHNESKQ) are compositionally biased toward basic and acidic residues. Residues 322 to 394 (SYEPHLFGRE…LARPDASSTP (73 aa)) are required for transcriptional activity. Residues 405 to 719 (GGNPMSTTQL…KSIQQRAPPY (315 aa)) form an interaction with NFKB1/p50 region. ANK repeat units follow at residues 444-473 (DGDTFLHIAVAQGRRALSYVLARKMNALHM), 480-509 (NGQSAFQVAVAANQHLIVQDLVTLGAQVNT), 513-542 (WGRTPLHVCAEKGHSQVLQAIQKGAAGSNQ), 552-581 (DGLTPLHCAVLAHNAVVHELQRNQQPHSPE), 583-608 (QELLLKNKSLVDTIKCLIQMGAAVEA), 613-642 (SGRTALHLAAEEANLELIRLFLELPSCLSF), and 649-682 (NGNTALHVAASLQYRVTQLDAVRLLMRKGADPST).

Interacts with NFKB1/p50. Interacts with RELA. Interacts with AKIRIN2.

The protein resides in the nucleus. Functionally, involved in regulation of NF-kappa-B transcription factor complexes. Inhibits NF-kappa-B activity without affecting its nuclear translocation upon stimulation. Inhibits DNA-binding of RELA and NFKB1/p50, and of the NF-kappa-B p65-p50 heterodimer and the NF-kappa-B p50-p50 homodimer. Also seems to activate NF-kappa-B-mediated transcription. In vitro, upon association with NFKB1/p50 has transcriptional activation activity and, together with NFKB1/p50 and RELA, is recruited to LCN2 promoters. Promotes transcription of LCN2 and DEFB4. Is recruited to IL-6 promoters and activates IL-6 but decreases TNF-alpha production in response to LPS. Seems to be involved in the induction of inflammatory genes activated through TLR/IL-1 receptor signaling. Involved in the induction of T helper 17 cells (Th17) differentiation upon recognition of antigen by T cell antigen receptor (TCR). The polypeptide is NF-kappa-B inhibitor zeta (NFKBIZ) (Bos taurus (Bovine)).